The chain runs to 162 residues: Cyclic pyranopterin monophosphate synthase (162 aa).

Residues 75–77 (LCH) and 113–114 (ME) each bind substrate. The active site involves Asp-128.

Belongs to the MoaC family. Homohexamer; trimer of dimers.

It carries out the reaction (8S)-3',8-cyclo-7,8-dihydroguanosine 5'-triphosphate = cyclic pyranopterin phosphate + diphosphate. The protein operates within cofactor biosynthesis; molybdopterin biosynthesis. In terms of biological role, catalyzes the conversion of (8S)-3',8-cyclo-7,8-dihydroguanosine 5'-triphosphate to cyclic pyranopterin monophosphate (cPMP). The polypeptide is Cyclic pyranopterin monophosphate synthase (Burkholderia cenocepacia (strain HI2424)).